The following is a 119-amino-acid chain: Ribosome-binding factor A (119 aa).

The protein belongs to the RbfA family. In terms of assembly, monomer. Binds 30S ribosomal subunits, but not 50S ribosomal subunits or 70S ribosomes.

It is found in the cytoplasm. In terms of biological role, one of several proteins that assist in the late maturation steps of the functional core of the 30S ribosomal subunit. Associates with free 30S ribosomal subunits (but not with 30S subunits that are part of 70S ribosomes or polysomes). Required for efficient processing of 16S rRNA. May interact with the 5'-terminal helix region of 16S rRNA. This is Ribosome-binding factor A from Chlorobium luteolum (strain DSM 273 / BCRC 81028 / 2530) (Pelodictyon luteolum).